A 188-amino-acid polypeptide reads, in one-letter code: Peptidyl-tRNA hydrolase (188 aa).

Y14 serves as a coordination point for tRNA. The Proton acceptor role is filled by H19. Y64, N66, and N112 together coordinate tRNA.

It belongs to the PTH family. Monomer.

It localises to the cytoplasm. The catalysed reaction is an N-acyl-L-alpha-aminoacyl-tRNA + H2O = an N-acyl-L-amino acid + a tRNA + H(+). Functionally, hydrolyzes ribosome-free peptidyl-tRNAs (with 1 or more amino acids incorporated), which drop off the ribosome during protein synthesis, or as a result of ribosome stalling. Its function is as follows. Catalyzes the release of premature peptidyl moieties from peptidyl-tRNA molecules trapped in stalled 50S ribosomal subunits, and thus maintains levels of free tRNAs and 50S ribosomes. The polypeptide is Peptidyl-tRNA hydrolase (Bacillus velezensis (strain DSM 23117 / BGSC 10A6 / LMG 26770 / FZB42) (Bacillus amyloliquefaciens subsp. plantarum)).